Here is a 55-residue protein sequence, read N- to C-terminus: ATP synthase F(0) complex subunit 8 (55 aa).

The chain crosses the membrane as a helical span at residues 4–24 (LNPAPWFMIFMFTWAIFLTIL). Positions 34–55 (PNEPSPQGMTTPKTAPWNWPWH) are disordered.

This sequence belongs to the ATPase protein 8 family. In terms of assembly, component of the ATP synthase complex composed at least of ATP5F1A/subunit alpha, ATP5F1B/subunit beta, ATP5MC1/subunit c (homooctomer), MT-ATP6/subunit a, MT-ATP8/subunit 8, ATP5ME/subunit e, ATP5MF/subunit f, ATP5MG/subunit g, ATP5MK/subunit k, ATP5MJ/subunit j, ATP5F1C/subunit gamma, ATP5F1D/subunit delta, ATP5F1E/subunit epsilon, ATP5PF/subunit F6, ATP5PB/subunit b, ATP5PD/subunit d, ATP5PO/subunit OSCP. ATP synthase complex consists of a soluble F(1) head domain (subunits alpha(3) and beta(3)) - the catalytic core - and a membrane F(0) domain - the membrane proton channel (subunits c, a, 8, e, f, g, k and j). These two domains are linked by a central stalk (subunits gamma, delta, and epsilon) rotating inside the F1 region and a stationary peripheral stalk (subunits F6, b, d, and OSCP).

Its subcellular location is the mitochondrion membrane. Subunit 8, of the mitochondrial membrane ATP synthase complex (F(1)F(0) ATP synthase or Complex V) that produces ATP from ADP in the presence of a proton gradient across the membrane which is generated by electron transport complexes of the respiratory chain. ATP synthase complex consist of a soluble F(1) head domain - the catalytic core - and a membrane F(1) domain - the membrane proton channel. These two domains are linked by a central stalk rotating inside the F(1) region and a stationary peripheral stalk. During catalysis, ATP synthesis in the catalytic domain of F(1) is coupled via a rotary mechanism of the central stalk subunits to proton translocation. In vivo, can only synthesize ATP although its ATP hydrolase activity can be activated artificially in vitro. Part of the complex F(0) domain. This is ATP synthase F(0) complex subunit 8 from Gadus morhua (Atlantic cod).